The following is a 428-amino-acid chain: Cysteine--tRNA ligase (428 aa).

Cys-23 contacts Zn(2+). Positions 25 to 35 match the 'HIGH' region motif; that stretch reads PTVYNDLHLGN. Zn(2+)-binding residues include Cys-196, His-221, and Glu-225. The 'KMSKS' region motif lies at 253-257; the sequence is KMSKS. Lys-256 contributes to the ATP binding site.

Belongs to the class-I aminoacyl-tRNA synthetase family. In terms of assembly, monomer. The cofactor is Zn(2+).

It is found in the cytoplasm. The catalysed reaction is tRNA(Cys) + L-cysteine + ATP = L-cysteinyl-tRNA(Cys) + AMP + diphosphate. This Mycoplasma genitalium (strain ATCC 33530 / DSM 19775 / NCTC 10195 / G37) (Mycoplasmoides genitalium) protein is Cysteine--tRNA ligase (cysS).